A 275-amino-acid chain; its full sequence is uncharacterized protein (275 aa).

Positions 1–162 (NLFSVIVSLI…ITSYWTEVQR (162 aa)) constitute an ABC transmembrane type-1 domain. Helical transmembrane passes span 21–41 (LYLV…GNIM), 106–126 (IMNL…YYLM), and 137–157 (FAYV…TSYW).

It localises to the cell membrane. This is an uncharacterized protein from Staphylococcus epidermidis.